The sequence spans 138 residues: Cysteine desulfuration protein SufE (138 aa).

The Cysteine persulfide intermediate role is filled by C51.

The protein belongs to the SufE family. In terms of assembly, homodimer. Interacts with SufS.

It is found in the cytoplasm. The protein operates within cofactor biosynthesis; iron-sulfur cluster biosynthesis. Participates in cysteine desulfuration mediated by SufS. Cysteine desulfuration mobilizes sulfur from L-cysteine to yield L-alanine and constitutes an essential step in sulfur metabolism for biosynthesis of a variety of sulfur-containing biomolecules. Functions as a sulfur acceptor for SufS, by mediating the direct transfer of the sulfur atom from the S-sulfanylcysteine of SufS, an intermediate product of cysteine desulfuration process. The chain is Cysteine desulfuration protein SufE from Escherichia coli O8 (strain IAI1).